We begin with the raw amino-acid sequence, 323 residues long: tRNA N6-adenosine threonylcarbamoyltransferase (323 aa).

The Fe cation site is built by histidine 106, histidine 110, and tyrosine 127. Residues 127-131, aspartate 159, glycine 172, glutamate 176, and asparagine 255 contribute to the substrate site; that span reads YVSGA. Aspartate 283 contacts Fe cation.

Belongs to the KAE1 / TsaD family. In terms of assembly, monomer. Component of the KEOPS complex that consists of Kae1, Bud32, Cgi121 and Pcc1; the whole complex dimerizes. The cofactor is Fe(2+).

Its subcellular location is the cytoplasm. It carries out the reaction L-threonylcarbamoyladenylate + adenosine(37) in tRNA = N(6)-L-threonylcarbamoyladenosine(37) in tRNA + AMP + H(+). In terms of biological role, required for the formation of a threonylcarbamoyl group on adenosine at position 37 (t(6)A37) in tRNAs that read codons beginning with adenine. Is a component of the KEOPS complex that is probably involved in the transfer of the threonylcarbamoyl moiety of threonylcarbamoyl-AMP (TC-AMP) to the N6 group of A37. Kae1 likely plays a direct catalytic role in this reaction, but requires other protein(s) of the complex to fulfill this activity. The protein is tRNA N6-adenosine threonylcarbamoyltransferase of Methanocella arvoryzae (strain DSM 22066 / NBRC 105507 / MRE50).